Reading from the N-terminus, the 367-residue chain is Quinolinate synthase (367 aa).

Iminosuccinate is bound by residues H45 and S62. C109 lines the [4Fe-4S] cluster pocket. Residues 140–142 and S161 contribute to the iminosuccinate site; that span reads YVN. C229 is a binding site for [4Fe-4S] cluster. Residues 255 to 257 and T272 each bind iminosuccinate; that span reads HPE. C319 provides a ligand contact to [4Fe-4S] cluster.

This sequence belongs to the quinolinate synthase family. Type 3 subfamily. [4Fe-4S] cluster serves as cofactor.

The protein resides in the cytoplasm. The enzyme catalyses iminosuccinate + dihydroxyacetone phosphate = quinolinate + phosphate + 2 H2O + H(+). It functions in the pathway cofactor biosynthesis; NAD(+) biosynthesis; quinolinate from iminoaspartate: step 1/1. In terms of biological role, catalyzes the condensation of iminoaspartate with dihydroxyacetone phosphate to form quinolinate. The sequence is that of Quinolinate synthase from Geobacillus kaustophilus (strain HTA426).